The chain runs to 157 residues: GTP-dependent dephospho-CoA kinase (157 aa).

GTP is bound by residues D40, D59, K61, E107, and D128.

This sequence belongs to the GTP-dependent DPCK family.

It catalyses the reaction 3'-dephospho-CoA + GTP = GDP + CoA + H(+). Its pathway is cofactor biosynthesis; coenzyme A biosynthesis. In terms of biological role, catalyzes the GTP-dependent phosphorylation of the 3'-hydroxyl group of dephosphocoenzyme A to form coenzyme A (CoA). The polypeptide is GTP-dependent dephospho-CoA kinase (Desulfurococcus amylolyticus (strain DSM 18924 / JCM 16383 / VKM B-2413 / 1221n) (Desulfurococcus kamchatkensis)).